The primary structure comprises 368 residues: MPLVRLDISHVRNLSSVRFEPSPQVNVIVGKNGSGKTSVLEAIHLLSFGRSFRSHKHKTYIQHENDACIVFAQLHQKQGSPIRVGLQRHRDGQIDVRIQGQRAQSVIELAERLPVQLINPDAFRLLEGSPSIRRQFIDWGAFHFDKDFIQAWRGWQKALKQRNTLLRRGKISLSLLAAFDQELIRLGEQVNQSRKAYVEKLTPHFVKVLSLLTTELSVSLQFFQGWDAQKNLAMAVEAGRERDIELGYTHTGPQRADLRVKTATGDALDTLSRGQQKLVVSALKIAQGQLLIDMGRPLVFLVDDLPAELDANHRQKLCQLLESLNSQIFITSVEPDTTDFTWADTTDVRQFSMTNGELSLLSKGLQES.

30-37 (GKNGSGKT) serves as a coordination point for ATP.

Belongs to the RecF family.

It localises to the cytoplasm. In terms of biological role, the RecF protein is involved in DNA metabolism; it is required for DNA replication and normal SOS inducibility. RecF binds preferentially to single-stranded, linear DNA. It also seems to bind ATP. The polypeptide is DNA replication and repair protein RecF (Marinomonas sp. (strain MWYL1)).